The chain runs to 262 residues: Ribosomal RNA small subunit methyltransferase A (262 aa).

The S-adenosyl-L-methionine site is built by asparagine 13, leucine 15, glycine 40, glutamate 61, aspartate 85, and asparagine 104.

Belongs to the class I-like SAM-binding methyltransferase superfamily. rRNA adenine N(6)-methyltransferase family. RsmA subfamily.

The protein resides in the cytoplasm. The catalysed reaction is adenosine(1518)/adenosine(1519) in 16S rRNA + 4 S-adenosyl-L-methionine = N(6)-dimethyladenosine(1518)/N(6)-dimethyladenosine(1519) in 16S rRNA + 4 S-adenosyl-L-homocysteine + 4 H(+). In terms of biological role, specifically dimethylates two adjacent adenosines (A1518 and A1519) in the loop of a conserved hairpin near the 3'-end of 16S rRNA in the 30S particle. May play a critical role in biogenesis of 30S subunits. This Chromobacterium violaceum (strain ATCC 12472 / DSM 30191 / JCM 1249 / CCUG 213 / NBRC 12614 / NCIMB 9131 / NCTC 9757 / MK) protein is Ribosomal RNA small subunit methyltransferase A.